The following is a 201-amino-acid chain: Glutathione peroxidase 1 (201 aa).

At Ser-32 the chain carries Phosphoserine. Sec-47 is a catalytic residue. Residue Sec-47 is a non-standard amino acid, selenocysteine. Residues Lys-86 and Lys-112 each carry the N6-acetyllysine; alternate modification. 2 positions are modified to N6-succinyllysine; alternate: Lys-86 and Lys-112. At Lys-119 the chain carries N6-acetyllysine. N6-acetyllysine; alternate is present on Lys-146. Position 146 is an N6-succinyllysine; alternate (Lys-146). Ser-195 and Ser-199 each carry phosphoserine.

The protein belongs to the glutathione peroxidase family. As to quaternary structure, homotetramer. Interacts with MIEN1. In terms of processing, during periods of oxidative stress, Sec-47 may react with a superoxide radical, irreversibly lose hydroselenide and be converted to dehydroalanine. Expressed in liver and lung.

It localises to the cytoplasm. It is found in the mitochondrion. It carries out the reaction 2 glutathione + H2O2 = glutathione disulfide + 2 H2O. It catalyses the reaction a hydroperoxy polyunsaturated fatty acid + 2 glutathione = a hydroxy polyunsaturated fatty acid + glutathione disulfide + H2O. The catalysed reaction is tert-butyl hydroperoxide + 2 glutathione = tert-butanol + glutathione disulfide + H2O. The enzyme catalyses cumene hydroperoxide + 2 glutathione = 2-phenylpropan-2-ol + glutathione disulfide + H2O. It carries out the reaction (13S)-hydroperoxy-(9Z,11E)-octadecadienoate + 2 glutathione = (13S)-hydroxy-(9Z,11E)-octadecadienoate + glutathione disulfide + H2O. It catalyses the reaction (9S)-hydroperoxy-(10E,12Z)-octadecadienoate + 2 glutathione = (9S)-hydroxy-(10E,12Z)-octadecadienoate + glutathione disulfide + H2O. The catalysed reaction is (5S)-hydroperoxy-(6E,8Z,11Z,14Z)-eicosatetraenoate + 2 glutathione = (5S)-hydroxy-(6E,8Z,11Z,14Z)-eicosatetraenoate + glutathione disulfide + H2O. The enzyme catalyses (12S)-hydroperoxy-(5Z,8Z,10E,14Z)-eicosatetraenoate + 2 glutathione = (12S)-hydroxy-(5Z,8Z,10E,14Z)-eicosatetraenoate + glutathione disulfide + H2O. It carries out the reaction (12R)-hydroperoxy-(5Z,8Z,10E,14Z)-eicosatetraenoate + 2 glutathione = (12R)-hydroxy-(5Z,8Z,10E,14Z)-eicosatetraenoate + glutathione disulfide + H2O. It catalyses the reaction (15S)-hydroperoxy-(5Z,8Z,11Z,13E)-eicosatetraenoate + 2 glutathione = (15S)-hydroxy-(5Z,8Z,11Z,13E)-eicosatetraenoate + glutathione disulfide + H2O. The catalysed reaction is (5S)-hydroperoxy-(6E,8Z,11Z,14Z,17Z)-eicosapentaenoate + 2 glutathione = (5S)-hydroxy-(6E,8Z,11Z,14Z,17Z)-eicosapentaenoate + glutathione disulfide + H2O. The enzyme catalyses (12S)-hydroperoxy-(5Z,8Z,10E,14Z,17Z)-eicosapentaenoate + 2 glutathione = (12S)-hydroxy-(5Z,8Z,10E,14Z,17Z)-eicosapentaenoate + glutathione disulfide + H2O. It carries out the reaction (15S)-hydroperoxy-(5Z,8Z,11Z,13E,17Z)-eicosapentaenoate + 2 glutathione = (15S)-hydroxy-(5Z,8Z,11Z,13E,17Z)-eicosapentaenoate + glutathione disulfide + H2O. It catalyses the reaction (15S)-hydroperoxy-(11Z,13E)-eicosadienoate + 2 glutathione = (15S)-hydroxy-(11Z,13E)-eicosadienoate + glutathione disulfide + H2O. The catalysed reaction is (17S)-hydroperoxy-(4Z,7Z,10Z,13Z,15E,19Z)-docosahexaenoate + 2 glutathione = (17S)-hydroxy-(4Z,7Z,10Z,13Z,15E,19Z)-docosahexaenoate + glutathione disulfide + H2O. Functionally, catalyzes the reduction of hydroperoxides in a glutathione-dependent manner thus regulating cellular redox homeostasis. Can reduce small soluble hydroperoxides such as H2O2, cumene hydroperoxide and tert-butyl hydroperoxide, as well as several fatty acid-derived hydroperoxides. In platelets catalyzes the reduction of 12-hydroperoxyeicosatetraenoic acid, the primary product of the arachidonate 12-lipoxygenase pathway. This Rattus norvegicus (Rat) protein is Glutathione peroxidase 1.